Here is a 380-residue protein sequence, read N- to C-terminus: MKNEMLALILAGGQGTRLGKLTQSIAKPAVQFGGRYRIIDFALSNCANSGIHNVGVITQYQPLALNSHIGNGSSWGLDGINTGVSILQPYSASEGNRWFEGTSHAIFQNIDYIDSINPEYVLILSGDHIYKMDYDDMLQSHKDNNASLTVAVLDVPLKEASRFGIMNTDANNRIVEFEEKPENPKSTKASMGIYIFDWQRLRNMLVVAEKSNVDMSDFGKNVIPNYLESGESVYAYEFAGYWKDVGTVESLWEANMEYINPENALDSRNRRWKIYSRNLISPPNFLSENAKVEDSLVVDGCFVDGTVKHSILSTGAQVRKDAVIEDSVIMSGAIIGQGAKIKRAIIGEGAIIAEGVEIDGTEEVFVVGYNEKVGVPKDED.

Alpha-D-glucose 1-phosphate is bound by residues G164, 179–180 (EK), and S190.

The protein belongs to the bacterial/plant glucose-1-phosphate adenylyltransferase family. As to quaternary structure, homotetramer.

The catalysed reaction is alpha-D-glucose 1-phosphate + ATP + H(+) = ADP-alpha-D-glucose + diphosphate. Its pathway is glycan biosynthesis; glycogen biosynthesis. Involved in the biosynthesis of ADP-glucose, a building block required for the elongation reactions to produce glycogen. Catalyzes the reaction between ATP and alpha-D-glucose 1-phosphate (G1P) to produce pyrophosphate and ADP-Glc. This Streptococcus gordonii (strain Challis / ATCC 35105 / BCRC 15272 / CH1 / DL1 / V288) protein is Glucose-1-phosphate adenylyltransferase.